The sequence spans 645 residues: DNA ligase (645 aa).

NAD(+) is bound by residues 30–34 (DIEYD), 79–80 (SM), and E106. Residue K108 is the N6-AMP-lysine intermediate of the active site. Positions 129, 163, and 302 each coordinate NAD(+). Residues C396, C399, C412, and C417 each contribute to the Zn(2+) site. The BRCT domain occupies 570-645 (ISQNVFTKKT…ISEDEFKEML (76 aa)).

Belongs to the NAD-dependent DNA ligase family. LigA subfamily. Mg(2+) is required as a cofactor. Mn(2+) serves as cofactor.

It carries out the reaction NAD(+) + (deoxyribonucleotide)n-3'-hydroxyl + 5'-phospho-(deoxyribonucleotide)m = (deoxyribonucleotide)n+m + AMP + beta-nicotinamide D-nucleotide.. In terms of biological role, DNA ligase that catalyzes the formation of phosphodiester linkages between 5'-phosphoryl and 3'-hydroxyl groups in double-stranded DNA using NAD as a coenzyme and as the energy source for the reaction. It is essential for DNA replication and repair of damaged DNA. In Campylobacter hominis (strain ATCC BAA-381 / DSM 21671 / CCUG 45161 / LMG 19568 / NCTC 13146 / CH001A), this protein is DNA ligase.